The following is a 125-amino-acid chain: Protein JAZ13 (125 aa).

Positions 6-10 (LDLHL) match the EAR motif. A disordered region spans residues 99 to 125 (KKRSKSFTLTPNYTSSTSSSSSSLHNF). Over residues 112–125 (TSSTSSSSSSLHNF) the composition is skewed to low complexity.

In terms of assembly, monomer. Lack of homodimerization, and very weak or no interaction with AFPH2/NINJA and other JAZ proteins. Interacts (via EAR motif) with TPL. Interacts (via jas motif) with MYC2. In terms of processing, phosphorylated at multiple serine residues.

Non-TIFY functional repressor of jasmonate (JA)-mediated growth and defense responses. Intrinsically resistant to JA-induced turnover, probably due to the absence of the canonical degron that strongly interacts with COI1 in the presence of JA-Ile in the TIFY/JAZ proteins. This is Protein JAZ13 from Arabidopsis thaliana (Mouse-ear cress).